Here is a 298-residue protein sequence, read N- to C-terminus: Probable endonuclease 4 (298 aa).

9 residues coordinate Zn(2+): histidine 69, histidine 111, glutamate 146, aspartate 180, histidine 183, histidine 215, aspartate 228, histidine 230, and glutamate 260.

This sequence belongs to the AP endonuclease 2 family. Zn(2+) serves as cofactor.

It catalyses the reaction Endonucleolytic cleavage to 5'-phosphooligonucleotide end-products.. Endonuclease IV plays a role in DNA repair. It cleaves phosphodiester bonds at apurinic or apyrimidinic (AP) sites, generating a 3'-hydroxyl group and a 5'-terminal sugar phosphate. In Bacillus anthracis (strain A0248), this protein is Probable endonuclease 4.